Reading from the N-terminus, the 426-residue chain is Formyl-CoA:oxalate CoA-transferase (426 aa).

CoA-binding positions include glutamine 17 to serine 18, arginine 38, leucine 72 to lysine 75, asparagine 96 to glycine 98, arginine 104, and lysine 136 to glutamate 139. The active-site Nucleophile is the aspartate 168. Glycine 247–glutamine 249 provides a ligand contact to substrate.

Belongs to the CoA-transferase III family. Frc subfamily. Homodimer.

The catalysed reaction is formyl-CoA + oxalate = oxalyl-CoA + formate. It participates in metabolic intermediate degradation; oxalate degradation; CO(2) and formate from oxalate: step 1/2. Functionally, involved in the catabolism of oxalate and in the adapatation to low pH via the induction of the oxalate-dependent acid tolerance response (ATR). Catalyzes the transfer of the CoA moiety from formyl-CoA to oxalate. The polypeptide is Formyl-CoA:oxalate CoA-transferase (Rhodopseudomonas palustris (strain BisB18)).